A 316-amino-acid polypeptide reads, in one-letter code: 4-hydroxy-3-methylbut-2-enyl diphosphate reductase (316 aa).

A [4Fe-4S] cluster-binding site is contributed by Cys12. 2 residues coordinate (2E)-4-hydroxy-3-methylbut-2-enyl diphosphate: His41 and His74. Residues His41 and His74 each contribute to the dimethylallyl diphosphate site. Isopentenyl diphosphate contacts are provided by His41 and His74. Cys96 serves as a coordination point for [4Fe-4S] cluster. A (2E)-4-hydroxy-3-methylbut-2-enyl diphosphate-binding site is contributed by His124. Residue His124 participates in dimethylallyl diphosphate binding. Isopentenyl diphosphate is bound at residue His124. The active-site Proton donor is the Glu126. A (2E)-4-hydroxy-3-methylbut-2-enyl diphosphate-binding site is contributed by Thr169. Cys199 serves as a coordination point for [4Fe-4S] cluster. (2E)-4-hydroxy-3-methylbut-2-enyl diphosphate contacts are provided by Ser227, Ser228, Asn229, and Ser271. The dimethylallyl diphosphate site is built by Ser227, Ser228, Asn229, and Ser271. Residues Ser227, Ser228, Asn229, and Ser271 each contribute to the isopentenyl diphosphate site.

It belongs to the IspH family. [4Fe-4S] cluster is required as a cofactor.

The catalysed reaction is isopentenyl diphosphate + 2 oxidized [2Fe-2S]-[ferredoxin] + H2O = (2E)-4-hydroxy-3-methylbut-2-enyl diphosphate + 2 reduced [2Fe-2S]-[ferredoxin] + 2 H(+). It carries out the reaction dimethylallyl diphosphate + 2 oxidized [2Fe-2S]-[ferredoxin] + H2O = (2E)-4-hydroxy-3-methylbut-2-enyl diphosphate + 2 reduced [2Fe-2S]-[ferredoxin] + 2 H(+). The protein operates within isoprenoid biosynthesis; dimethylallyl diphosphate biosynthesis; dimethylallyl diphosphate from (2E)-4-hydroxy-3-methylbutenyl diphosphate: step 1/1. It functions in the pathway isoprenoid biosynthesis; isopentenyl diphosphate biosynthesis via DXP pathway; isopentenyl diphosphate from 1-deoxy-D-xylulose 5-phosphate: step 6/6. Its function is as follows. Catalyzes the conversion of 1-hydroxy-2-methyl-2-(E)-butenyl 4-diphosphate (HMBPP) into a mixture of isopentenyl diphosphate (IPP) and dimethylallyl diphosphate (DMAPP). Acts in the terminal step of the DOXP/MEP pathway for isoprenoid precursor biosynthesis. In Stenotrophomonas maltophilia (strain K279a), this protein is 4-hydroxy-3-methylbut-2-enyl diphosphate reductase.